A 189-amino-acid polypeptide reads, in one-letter code: Potassium-transporting ATPase KdpC subunit (189 aa).

The helical transmembrane segment at 6–26 (PAIMMVLVFTIICGGIYPAVV) threads the bilayer.

Belongs to the KdpC family. The system is composed of three essential subunits: KdpA, KdpB and KdpC.

The protein resides in the cell inner membrane. Functionally, part of the high-affinity ATP-driven potassium transport (or Kdp) system, which catalyzes the hydrolysis of ATP coupled with the electrogenic transport of potassium into the cytoplasm. This subunit acts as a catalytic chaperone that increases the ATP-binding affinity of the ATP-hydrolyzing subunit KdpB by the formation of a transient KdpB/KdpC/ATP ternary complex. The chain is Potassium-transporting ATPase KdpC subunit from Geobacter metallireducens (strain ATCC 53774 / DSM 7210 / GS-15).